The following is a 141-amino-acid chain: Anthrone oxygenase ptaC (141 aa).

A signal peptide spans 1–19; it reads MMGLPLMAVPMLLDTGADP. 2 helical membrane passes run 33-53 and 64-84; these read GVRT…WTII and ILAV…YVLA.

The protein belongs to the anthrone oxygenase family.

The protein resides in the membrane. Its pathway is secondary metabolite biosynthesis. Anthrone oxygenase; part of the gene cluster that mediates the biosynthesis of pestheic acid, a diphenyl ether which is a biosynthetic precursor of the unique chloropupukeananes. The biosynthesis initiates from condensation of acetate and malonate units catalyzed by the non-reducing PKS ptaA. As the ptaA protein is TE/CLC domain-deficient, hydrolysis and Claisen cyclization of the polyketide could be catalyzed by ptaB containing a beta-lactamase domain. The ptaB protein might hydrolyze the thioester bond between the ACP of ptaA and the intermediate to release atrochrysone carboxylic acid, which is spontaneously dehydrated to form endocrocin anthrone. Endocrocin anthrone is then converted to endocrocin, catalyzed by the anthrone oxygenase ptaC. Spontaneous decarboxylation of endocrocin occurs to generate emodin. An O-methyltransferase (ptaH or ptaI) could methylate emodin to form physcion. PtaJ could then catalyze the oxidative cleavage of physcion, and rotation of the intermediate could then afford desmethylisosulochrin. PtaF, a putative NADH-dependent oxidoreductase, might also participate in the oxidative cleavage step. Desmethylisosulochrin is then transformed by another O-methyltransferase (ptaH or ptaI) to form isosulochrin. Chlorination of isosulochrin by ptaM in the cyclohexadienone B ring then produces chloroisosulochrin. PtaE is responsible for the oxidative coupling reactions of both benzophenones isosulochrin and chloroisosulochrin to RES-1214-1 and pestheic acid respectively, regardless of chlorination. The sequence is that of Anthrone oxygenase ptaC from Pestalotiopsis fici (strain W106-1 / CGMCC3.15140).